Consider the following 59-residue polypeptide: Large ribosomal subunit protein bL32 (59 aa).

The span at 1-19 (MPVPKRRMSRSNTRSRRAQ) shows a compositional bias: basic residues. The segment at 1–20 (MPVPKRRMSRSNTRSRRAQW) is disordered.

It belongs to the bacterial ribosomal protein bL32 family.

The protein is Large ribosomal subunit protein bL32 of Acidothermus cellulolyticus (strain ATCC 43068 / DSM 8971 / 11B).